Consider the following 215-residue polypeptide: Probable phosphoglycerate mutase GpmB (215 aa).

Substrate contacts are provided by residues R8–N15, Q21–G22, R58, R60, E82–M85, R104–R105, and G151–I152. Catalysis depends on H9, which acts as the Tele-phosphohistidine intermediate. The active-site Proton donor/acceptor is the E82.

It belongs to the phosphoglycerate mutase family. GpmB subfamily.

The catalysed reaction is (2R)-2-phosphoglycerate = (2R)-3-phosphoglycerate. It participates in carbohydrate degradation; glycolysis; pyruvate from D-glyceraldehyde 3-phosphate: step 3/5. The protein is Probable phosphoglycerate mutase GpmB of Escherichia coli O1:K1 / APEC.